Consider the following 466-residue polypeptide: Cysteine--tRNA ligase (466 aa).

Residue Cys28 coordinates Zn(2+). The 'HIGH' region signature appears at Pro30 to Asn40. Zn(2+) is bound by residues Cys208, His233, and Glu237. The 'KMSKS' region motif lies at Lys265 to Ser269. ATP is bound at residue Lys268.

This sequence belongs to the class-I aminoacyl-tRNA synthetase family. As to quaternary structure, monomer. It depends on Zn(2+) as a cofactor.

The protein resides in the cytoplasm. The catalysed reaction is tRNA(Cys) + L-cysteine + ATP = L-cysteinyl-tRNA(Cys) + AMP + diphosphate. The protein is Cysteine--tRNA ligase of Staphylococcus haemolyticus (strain JCSC1435).